We begin with the raw amino-acid sequence, 1821 residues long: Latent-transforming growth factor beta-binding protein 2 (1821 aa).

The N-terminal stretch at methionine 1–alanine 35 is a signal peptide. Disordered stretches follow at residues aspartate 38 to glycine 58 and glycine 81 to glycine 165. Residues serine 94–valine 115 are heparin-binding. Composition is skewed to low complexity over residues arginine 108–glutamine 120 and glutamine 129–leucine 145. A glycan (N-linked (GlcNAc...) asparagine) is linked at asparagine 181. The EGF-like 1 domain maps to isoleucine 187 to glutamate 219. Disulfide bonds link cysteine 191–cysteine 201, cysteine 195–cysteine 207, and cysteine 209–cysteine 218. The disordered stretch occupies residues proline 229 to proline 339. Residues serine 232–serine 249 are heparin-binding. Pro residues predominate over residues proline 262–proline 274. 2 stretches are compositionally biased toward polar residues: residues serine 280–valine 292 and alanine 304–alanine 314. Residue asparagine 343 is glycosylated (N-linked (GlcNAc...) asparagine). Heparin is bound at residue leucine 344 to valine 354. Positions arginine 375–aspartate 377 match the Cell attachment site motif. One can recognise an EGF-like 2 domain in the interval arginine 396 to histidine 428. 3 disulfides stabilise this stretch: cysteine 400/cysteine 410, cysteine 404/cysteine 416, and cysteine 418/cysteine 427. Asparagine 421 carries N-linked (GlcNAc...) asparagine glycosylation. Position 506 is a phosphoserine (serine 506). The segment at arginine 510–alanine 544 is disordered. The region spanning glycine 552–glycine 604 is the TB 1 domain. Disulfide bonds link cysteine 554-cysteine 576, cysteine 563-cysteine 589, and cysteine 577-cysteine 592. A glycan (N-linked (GlcNAc...) asparagine) is linked at asparagine 616. Positions aspartate 622–valine 662 constitute an EGF-like 3; calcium-binding domain. 7 disulfides stabilise this stretch: cysteine 626–cysteine 637, cysteine 632–cysteine 646, cysteine 648–cysteine 661, cysteine 674–cysteine 696, cysteine 683–cysteine 709, cysteine 697–cysteine 712, and cysteine 698–cysteine 724. Residues glycine 672–cysteine 724 form the TB 2 domain. The span at alanine 744–glycine 757 shows a compositional bias: basic and acidic residues. Positions alanine 744–proline 772 are disordered. N-linked (GlcNAc...) asparagine glycosylation is present at asparagine 811. The region spanning glycine 844–threonine 886 is the EGF-like 4 domain. 49 cysteine pairs are disulfide-bonded: cysteine 848-cysteine 861, cysteine 856-cysteine 870, cysteine 872-cysteine 885, cysteine 891-cysteine 902, cysteine 896-cysteine 911, cysteine 913-cysteine 928, cysteine 934-cysteine 945, cysteine 940-cysteine 954, cysteine 956-cysteine 968, cysteine 974-cysteine 985, cysteine 980-cysteine 994, cysteine 997-cysteine 1008, cysteine 1014-cysteine 1025, cysteine 1020-cysteine 1034, cysteine 1036-cysteine 1049, cysteine 1055-cysteine 1066, cysteine 1061-cysteine 1075, cysteine 1078-cysteine 1091, cysteine 1097-cysteine 1108, cysteine 1103-cysteine 1117, cysteine 1120-cysteine 1133, cysteine 1139-cysteine 1151, cysteine 1146-cysteine 1160, cysteine 1162-cysteine 1174, cysteine 1180-cysteine 1192, cysteine 1186-cysteine 1201, cysteine 1203-cysteine 1216, cysteine 1222-cysteine 1233, cysteine 1228-cysteine 1242, cysteine 1244-cysteine 1257, cysteine 1263-cysteine 1276, cysteine 1271-cysteine 1285, cysteine 1289-cysteine 1301, cysteine 1307-cysteine 1319, cysteine 1313-cysteine 1328, cysteine 1330-cysteine 1343, cysteine 1349-cysteine 1361, cysteine 1356-cysteine 1370, cysteine 1372-cysteine 1386, cysteine 1413-cysteine 1436, cysteine 1423-cysteine 1448, cysteine 1437-cysteine 1451, cysteine 1438-cysteine 1463, cysteine 1489-cysteine 1502, cysteine 1497-cysteine 1511, cysteine 1513-cysteine 1526, cysteine 1532-cysteine 1542, cysteine 1537-cysteine 1551, and cysteine 1553-cysteine 1566. Residues aspartate 887–glutamine 929 enclose the EGF-like 5; calcium-binding domain. The 40-residue stretch at aspartate 930–glutamine 969 folds into the EGF-like 6; calcium-binding domain. The 40-residue stretch at aspartate 970–valine 1009 folds into the EGF-like 7; calcium-binding domain. Positions aspartate 1010–glutamine 1050 constitute an EGF-like 8; calcium-binding domain. An EGF-like 9; calcium-binding domain is found at aspartate 1051 to glutamate 1092. Positions aspartate 1093–glutamate 1134 constitute an EGF-like 10; calcium-binding domain. The EGF-like 11; calcium-binding domain maps to aspartate 1135–glutamate 1175. N-linked (GlcNAc...) asparagine glycosylation occurs at asparagine 1170. The EGF-like 12; calcium-binding domain maps to aspartate 1176–glutamine 1217. The 41-residue stretch at aspartate 1218–valine 1258 folds into the EGF-like 13; calcium-binding domain. The region spanning aspartate 1259–isoleucine 1302 is the EGF-like 14; calcium-binding domain. The EGF-like 15; calcium-binding domain occupies aspartate 1303–valine 1344. N-linked (GlcNAc...) asparagine glycosylation occurs at asparagine 1309. The EGF-like 16; calcium-binding domain maps to aspartate 1345–arginine 1387. The 53-residue stretch at methionine 1411 to cysteine 1463 folds into the TB 3 domain. Asparagine 1430 carries N-linked (GlcNAc...) asparagine glycosylation. One can recognise an EGF-like 17; calcium-binding domain in the interval aspartate 1485 to glutamate 1527. An EGF-like 18; calcium-binding domain is found at aspartate 1528–methionine 1567. A glycan (N-linked (GlcNAc...) asparagine) is linked at asparagine 1568. The TB 4 domain maps to aspartate 1584–cysteine 1636. 10 disulfides stabilise this stretch: cysteine 1586–cysteine 1609, cysteine 1595–cysteine 1621, cysteine 1610–cysteine 1624, cysteine 1611–cysteine 1636, cysteine 1737–cysteine 1748, cysteine 1743–cysteine 1757, cysteine 1759–cysteine 1772, cysteine 1778–cysteine 1793, cysteine 1788–cysteine 1802, and cysteine 1804–cysteine 1817. Residues alanine 1639–glutamate 1821 form a C-terminal domain region. An EGF-like 19; calcium-binding domain is found at glutamine 1733 to valine 1773. Residues aspartate 1774–threonine 1818 form the EGF-like 20; calcium-binding domain.

The protein belongs to the LTBP family. In terms of assembly, forms part of the large latent transforming growth factor beta precursor complex; removal is essential for activation of complex. Interacts with SDC4. Interacts (via C-terminal domain) with FBN1 (via N-terminal domain) in a Ca(+2)-dependent manner. Post-translationally, N-Glycosylated. Contains hydroxylated asparagine residues. In terms of tissue distribution, expressed in the aorta (at protein level). Expressed in lung, weakly expressed in heart, placenta, liver and skeletal muscle.

Its subcellular location is the secreted. It localises to the extracellular space. The protein localises to the extracellular matrix. May play an integral structural role in elastic-fiber architectural organization and/or assembly. In Homo sapiens (Human), this protein is Latent-transforming growth factor beta-binding protein 2 (LTBP2).